The following is a 205-amino-acid chain: Adenylyl-sulfate kinase (205 aa).

Residue 31–38 (GLSGSGKS) participates in ATP binding. Ser-105 serves as the catalytic Phosphoserine intermediate.

The protein belongs to the APS kinase family.

The catalysed reaction is adenosine 5'-phosphosulfate + ATP = 3'-phosphoadenylyl sulfate + ADP + H(+). It functions in the pathway sulfur metabolism; hydrogen sulfide biosynthesis; sulfite from sulfate: step 2/3. Functionally, catalyzes the synthesis of activated sulfate. This Shewanella pealeana (strain ATCC 700345 / ANG-SQ1) protein is Adenylyl-sulfate kinase.